A 299-amino-acid polypeptide reads, in one-letter code: Protoheme IX farnesyltransferase (299 aa).

9 helical membrane passes run Val-25 to Val-45, Trp-47 to Val-67, Ala-95 to Phe-115, Leu-119 to Leu-139, Ile-147 to Gly-167, Pro-173 to Ile-193, Val-218 to His-238, Leu-243 to Tyr-263, and Phe-277 to Leu-297.

This sequence belongs to the UbiA prenyltransferase family. Protoheme IX farnesyltransferase subfamily.

It localises to the cell inner membrane. It catalyses the reaction heme b + (2E,6E)-farnesyl diphosphate + H2O = Fe(II)-heme o + diphosphate. It functions in the pathway porphyrin-containing compound metabolism; heme O biosynthesis; heme O from protoheme: step 1/1. Converts heme B (protoheme IX) to heme O by substitution of the vinyl group on carbon 2 of heme B porphyrin ring with a hydroxyethyl farnesyl side group. In Stutzerimonas stutzeri (strain A1501) (Pseudomonas stutzeri), this protein is Protoheme IX farnesyltransferase.